Reading from the N-terminus, the 302-residue chain is 4-diphosphocytidyl-2-C-methyl-D-erythritol kinase (302 aa).

The active site involves lysine 13. 101-111 (PVASGIGGGSS) contacts ATP. Aspartate 143 is an active-site residue.

This sequence belongs to the GHMP kinase family. IspE subfamily.

It catalyses the reaction 4-CDP-2-C-methyl-D-erythritol + ATP = 4-CDP-2-C-methyl-D-erythritol 2-phosphate + ADP + H(+). It functions in the pathway isoprenoid biosynthesis; isopentenyl diphosphate biosynthesis via DXP pathway; isopentenyl diphosphate from 1-deoxy-D-xylulose 5-phosphate: step 3/6. Its function is as follows. Catalyzes the phosphorylation of the position 2 hydroxy group of 4-diphosphocytidyl-2C-methyl-D-erythritol. The protein is 4-diphosphocytidyl-2-C-methyl-D-erythritol kinase of Granulibacter bethesdensis (strain ATCC BAA-1260 / CGDNIH1).